The chain runs to 316 residues: Conjugated bile acid hydrolase (316 aa).

The active-site Nucleophile is the Cys2. 2 residues coordinate deoxycholate: Cys2 and Arg18. Residue Asn81 coordinates taurine.

It belongs to the peptidase C59 family.

The enzyme catalyses cholate + taurine = taurocholate + H2O. It catalyses the reaction taurodeoxycholate + H2O = deoxycholate + taurine. It carries out the reaction taurochenodeoxycholate + H2O = chenodeoxycholate + taurine. The catalysed reaction is glycocholate + H2O = cholate + glycine. Its pathway is lipid metabolism; bile acid biosynthesis. Glycocholate hydrolysis is inhibited by various previously identified BSH inhibitors, including KIO(3), NaHIO(3), NaIO(4), CuCl(2), menadione, riboflavin, gossypetin, and the antibiotics oxytetracycline, demeclocycline hydrochloride and methacycline hydrochloride. Bile salt hydrolase that catalyzes the deconjugation of glycine- and taurine-linked bile salts, which occurs naturally in the intestines of animals, releasing amino acid residues and deconjugated bile salts (bile acids). Can hydrolyze the amide bond in the bile salts taurocholate (TCA), taurodeoxycholate (TDCA), taurochenodeoxycholate (TCDCA), taurohyodeoxycholate (THDCA) and tauroursodeoxycholate (TUDCA). Oh et al. did not detect activity with the glycine-conjugated bile salts glycocholate (GCA), glycodeoxycholate (GDCA) and glycochenodeoxycholate (GCDCA). However, a later study shows activity toward glycocholate (GCA). The polypeptide is Conjugated bile acid hydrolase (Lactobacillus acidophilus).